The sequence spans 360 residues: SUN domain-containing protein 3 (360 aa).

Over residues 1–10 (MSGRPNSRGS) the composition is skewed to polar residues. A disordered region spans residues 1–39 (MSGRPNSRGSSRLFRAPSEDASSGSSGSAVLPQEENPNA). Residues 1–47 (MSGRPNSRGSSRLFRAPSEDASSGSSGSAVLPQEENPNASGLTRSWK) are Nuclear-facing. Residues 48–67 (AVMGMVFILTLLLLGFINHM) form a helical membrane-spanning segment. Residues 68-360 (KLKEKAFPQK…RVHGTPKDDS (293 aa)) are Perinuclear space-facing. The stretch at 103-142 (KEQLELLKKESQTLENNFREILFLIEQIDVLKALLRDMQD) forms a coiled coil. The SUN domain maps to 196–357 (GASVVEAGTS…YRFRVHGTPK (162 aa)).

As to quaternary structure, self-associates. Interacts with SYNE1 and SPAG4/SUN4. Proposed to form a spermatogenesis-specific LINC complex with SYNE1 during sperm head formation possibly implicating a SUN domain-based heterotrimer with SPAG4/SUN4 associating with SYNE1.

Its subcellular location is the membrane. It is found in the nucleus envelope. It localises to the nucleus inner membrane. In terms of biological role, as a probable component of the LINC (LInker of Nucleoskeleton and Cytoskeleton) complex, involved in the connection between the nuclear lamina and the cytoskeleton. The nucleocytoplasmic interactions established by the LINC complex play an important role in the transmission of mechanical forces across the nuclear envelope and in nuclear movement and positioning. May be involved in nuclear remodeling during sperm head formation in spermatogenesis. A probable SUN3:SYNE1 LINC complex may tether spermatid nuclei to posterior cytoskeletal structures such as the manchette. The sequence is that of SUN domain-containing protein 3 (SUN3) from Bos taurus (Bovine).